The chain runs to 254 residues: Major prion protein (254 aa).

An N-terminal signal peptide occupies residues 1 to 22 (MANLSYWLLALFVATWTDVGLC). The segment at 23–231 (KKRPKPGGWN…SQAYYDGRRS (209 aa)) is interaction with GRB2, ERI3 and SYN1. Positions 25 to 104 (RPKPGGWNTG…THNQWNKPSK (80 aa)) are disordered. 5 consecutive repeat copies span residues 51 to 59 (PQGGGTWGQ), 60 to 67 (PHGGGWGQ), 68 to 75 (PHGGGWGQ), 76 to 83 (PHGGGWGQ), and 84 to 91 (PHGGGWGQ). The tract at residues 51–91 (PQGGGTWGQPHGGGWGQPHGGGWGQPHGGGWGQPHGGGWGQ) is 5 X 8 AA tandem repeats of P-H-G-G-G-W-G-Q. Over residues 52–95 (QGGGTWGQPHGGGWGQPHGGGWGQPHGGGWGQPHGGGWGQGGGT) the composition is skewed to gly residues. The Cu(2+) site is built by His-61, Gly-62, Gly-63, His-69, Gly-70, Gly-71, His-77, Gly-78, Gly-79, His-85, Gly-86, and Gly-87. The segment at 90-231 (GQGGGTHNQW…SQAYYDGRRS (142 aa)) is prP27-30 (protease resistant core). An intrachain disulfide couples Cys-179 to Cys-214. N-linked (GlcNAc...) asparagine glycosylation is found at Asn-181 and Asn-197. Ser-231 carries GPI-anchor amidated serine lipidation. Positions 232-254 (SAVLFSSPPVILLISFLIFLIVG) are cleaved as a propeptide — removed in mature form.

The protein belongs to the prion family. Monomer and homodimer. Has a tendency to aggregate into amyloid fibrils containing a cross-beta spine, formed by a steric zipper of superposed beta-strands. Soluble oligomers may represent an intermediate stage on the path to fibril formation. Copper binding may promote oligomerization. Interacts with GRB2, APP, ERI3/PRNPIP and SYN1. Mislocalized cytosolically exposed PrP interacts with MGRN1; this interaction alters MGRN1 subcellular location and causes lysosomal enlargement. Interacts with KIAA1191.

The protein resides in the cell membrane. The protein localises to the golgi apparatus. Its function is as follows. Its primary physiological function is unclear. Has cytoprotective activity against internal or environmental stresses. May play a role in neuronal development and synaptic plasticity. May be required for neuronal myelin sheath maintenance. May play a role in iron uptake and iron homeostasis. Soluble oligomers are toxic to cultured neuroblastoma cells and induce apoptosis (in vitro). Association with GPC1 (via its heparan sulfate chains) targets PRNP to lipid rafts. Also provides Cu(2+) or Zn(2+) for the ascorbate-mediated GPC1 deaminase degradation of its heparan sulfate side chains. This chain is Major prion protein (PRNP), found in Cricetulus griseus (Chinese hamster).